The primary structure comprises 464 residues: ATP synthase subunit beta (464 aa).

153 to 160 provides a ligand contact to ATP; the sequence is GGAGVGKT.

It belongs to the ATPase alpha/beta chains family. In terms of assembly, F-type ATPases have 2 components, CF(1) - the catalytic core - and CF(0) - the membrane proton channel. CF(1) has five subunits: alpha(3), beta(3), gamma(1), delta(1), epsilon(1). CF(0) has three main subunits: a(1), b(2) and c(9-12). The alpha and beta chains form an alternating ring which encloses part of the gamma chain. CF(1) is attached to CF(0) by a central stalk formed by the gamma and epsilon chains, while a peripheral stalk is formed by the delta and b chains.

The protein localises to the cell membrane. The catalysed reaction is ATP + H2O + 4 H(+)(in) = ADP + phosphate + 5 H(+)(out). Produces ATP from ADP in the presence of a proton gradient across the membrane. The catalytic sites are hosted primarily by the beta subunits. The chain is ATP synthase subunit beta from Acetivibrio thermocellus (strain ATCC 27405 / DSM 1237 / JCM 9322 / NBRC 103400 / NCIMB 10682 / NRRL B-4536 / VPI 7372) (Clostridium thermocellum).